We begin with the raw amino-acid sequence, 115 residues long: Basic leucine zipper transcriptional factor ATF-like (115 aa).

Residues 1-60 (MQQESDRNEQGYSSSPPSSNKQDSSDDTKKNHRREKNRIAAQKSRQRQTEKADSLHIESE) are disordered. A compositionally biased stretch (low complexity) spans 13–22 (SSSPPSSNKQ). In terms of domain architecture, bZIP spans 27 to 90 (DTKKNHRREK…KYLTCVLSTH (64 aa)). The tract at residues 29-51 (KKNHRREKNRIAAQKSRQRQTEK) is basic motif. Residues 47–60 (RQTEKADSLHIESE) are compositionally biased toward basic and acidic residues. Residues 55–83 (LHIESENLERLNSALRGEISGLREELKYL) form a leucine-zipper region.

The protein belongs to the bZIP family.

It is found in the nucleus. It localises to the cytoplasm. In terms of biological role, AP-1 family transcription factor that controls the differentiation of lineage-specific cells in the immune system: specifically mediates the differentiation of T-helper 17 cells (Th17), follicular T-helper cells (TfH), CD8(+) dendritic cells and class-switch recombination (CSR) in B-cells. The polypeptide is Basic leucine zipper transcriptional factor ATF-like (batf) (Xenopus laevis (African clawed frog)).